A 387-amino-acid chain; its full sequence is Carboxynorspermidine/carboxyspermidine decarboxylase (387 aa).

N6-(pyridoxal phosphate)lysine is present on Lys51. Residues Glu248 and Asp284 each contribute to the substrate site.

It belongs to the Orn/Lys/Arg decarboxylase class-II family. NspC subfamily. In terms of assembly, homodimer. It depends on pyridoxal 5'-phosphate as a cofactor.

It is found in the cytoplasm. The enzyme catalyses carboxynorspermidine + H(+) = norspermidine + CO2. It carries out the reaction carboxyspermidine + H(+) = spermidine + CO2. Catalyzes the decarboxylation of carboxynorspermidine and carboxyspermidine. Essential for biofilm formation. In Vibrio cholerae serotype O1 (strain ATCC 39315 / El Tor Inaba N16961), this protein is Carboxynorspermidine/carboxyspermidine decarboxylase.